The primary structure comprises 245 residues: 5-oxoprolinase subunit A (245 aa).

Belongs to the LamB/PxpA family. Forms a complex composed of PxpA, PxpB and PxpC.

The enzyme catalyses 5-oxo-L-proline + ATP + 2 H2O = L-glutamate + ADP + phosphate + H(+). Functionally, catalyzes the cleavage of 5-oxoproline to form L-glutamate coupled to the hydrolysis of ATP to ADP and inorganic phosphate. The protein is 5-oxoprolinase subunit A of Neisseria meningitidis serogroup C (strain 053442).